The chain runs to 418 residues: Glutamyl-tRNA reductase (418 aa).

Substrate-binding positions include 49–52 (TCNR), Ser-108, 113–115 (EPQ), and Gln-119. Cys-50 (nucleophile) is an active-site residue. 188-193 (GAGETI) contributes to the NADP(+) binding site.

Belongs to the glutamyl-tRNA reductase family. Homodimer.

It carries out the reaction (S)-4-amino-5-oxopentanoate + tRNA(Glu) + NADP(+) = L-glutamyl-tRNA(Glu) + NADPH + H(+). It participates in porphyrin-containing compound metabolism; protoporphyrin-IX biosynthesis; 5-aminolevulinate from L-glutamyl-tRNA(Glu): step 1/2. Its function is as follows. Catalyzes the NADPH-dependent reduction of glutamyl-tRNA(Glu) to glutamate 1-semialdehyde (GSA). This chain is Glutamyl-tRNA reductase, found in Aliivibrio fischeri (strain MJ11) (Vibrio fischeri).